Here is a 101-residue protein sequence, read N- to C-terminus: Urease subunit beta (101 aa).

This sequence belongs to the urease beta subunit family. As to quaternary structure, heterotrimer of UreA (gamma), UreB (beta) and UreC (alpha) subunits. Three heterotrimers associate to form the active enzyme.

The protein resides in the cytoplasm. It catalyses the reaction urea + 2 H2O + H(+) = hydrogencarbonate + 2 NH4(+). Its pathway is nitrogen metabolism; urea degradation; CO(2) and NH(3) from urea (urease route): step 1/1. The polypeptide is Urease subunit beta (Rhizobium etli (strain ATCC 51251 / DSM 11541 / JCM 21823 / NBRC 15573 / CFN 42)).